The chain runs to 787 residues: Bifunctional dethiobiotin synthetase/adenosylmethionine-8-amino-7-oxononanoate aminotransferase (787 aa).

23–28 (DVGKTI) is an ATP binding site. A Mg(2+)-binding site is contributed by T27. Residue T54 participates in substrate binding. D61 and E123 together coordinate Mg(2+). ATP is bound by residues 123–126 (ETAG) and 184–185 (KD). 323–324 (WW) contacts (8S)-8-amino-7-oxononanoate. 384–385 (GS) provides a ligand contact to pyridoxal 5'-phosphate. Y421 lines the (8S)-8-amino-7-oxononanoate pocket. D582 lines the pyridoxal 5'-phosphate pocket. Residues K611 and G645 each contribute to the (8S)-8-amino-7-oxononanoate site. A pyridoxal 5'-phosphate-binding site is contributed by 646 to 647 (HS). R756 is a (8S)-8-amino-7-oxononanoate binding site.

The protein in the N-terminal section; belongs to the dethiobiotin synthetase family. This sequence in the C-terminal section; belongs to the class-III pyridoxal-phosphate-dependent aminotransferase family. BioA subfamily. As to quaternary structure, homodimer. Requires Mg(2+) as cofactor. It depends on pyridoxal 5'-phosphate as a cofactor.

The protein localises to the mitochondrion matrix. The enzyme catalyses (7R,8S)-7,8-diammoniononanoate + CO2 + ATP = (4R,5S)-dethiobiotin + ADP + phosphate + 3 H(+). It catalyses the reaction (8S)-8-amino-7-oxononanoate + S-adenosyl-L-methionine = S-adenosyl-4-methylsulfanyl-2-oxobutanoate + (7R,8S)-7,8-diammoniononanoate. It functions in the pathway cofactor biosynthesis; biotin biosynthesis; biotin from 7,8-diaminononanoate: step 1/2. It participates in cofactor biosynthesis; biotin biosynthesis; 7,8-diaminononanoate from 8-amino-7-oxononanoate (SAM route): step 1/1. Functionally, bifunctional enzyme; part of the cluster involved in the biosynthesis of biotin (also known as vitamin B8 or vitamin H), a water-soluble vitamin that functions as a prosthetic group of many carboxylases, such as acetyl-CoA carboxylase and pyruvate carboxylase. Catalyzes a mechanistically unusual reaction, the ATP-dependent insertion of CO2 between the N7 and N8 nitrogen atoms of 7,8-diaminopelargonic acid (DAPA) to form an ureido ring. Also catalyzes the transfer of the alpha-amino group from S-adenosyl-L-methionine (SAM) to 7-keto-8-aminopelargonic acid (KAPA) to form 7,8-diaminopelargonic acid (DAPA). It is the only animotransferase known to utilize SAM as an amino donor. The polypeptide is Bifunctional dethiobiotin synthetase/adenosylmethionine-8-amino-7-oxononanoate aminotransferase (Emericella nidulans (strain FGSC A4 / ATCC 38163 / CBS 112.46 / NRRL 194 / M139) (Aspergillus nidulans)).